The primary structure comprises 506 residues: Probable cytochrome P450 519E1 (506 aa).

A helical transmembrane segment spans residues methionine 1 to lysine 21. Cysteine 453 lines the heme pocket.

Belongs to the cytochrome P450 family. Heme serves as cofactor.

The protein localises to the membrane. This Dictyostelium discoideum (Social amoeba) protein is Probable cytochrome P450 519E1 (cyp519E1).